The chain runs to 64 residues: Large ribosomal subunit protein uL30 (64 aa).

Residues 1 to 22 (MAKAAKTIKVEQTGSAIRRHHS) are disordered.

It belongs to the universal ribosomal protein uL30 family. Part of the 50S ribosomal subunit.

The sequence is that of Large ribosomal subunit protein uL30 from Nitrobacter winogradskyi (strain ATCC 25391 / DSM 10237 / CIP 104748 / NCIMB 11846 / Nb-255).